Here is a 227-residue protein sequence, read N- to C-terminus: Cytochrome c oxidase subunit 2 (227 aa).

Over 1–14 (MAYPFQLGLQDATS) the chain is Mitochondrial intermembrane. Residues 15-45 (PIMEELTNFHDHTLMIVFLISSLVLYIISLM) form a helical membrane-spanning segment. The Mitochondrial matrix portion of the chain corresponds to 46–59 (LTTKLTHTSTMDAQ). The chain crosses the membrane as a helical span at residues 60 to 87 (EVETIWTILPAVILILIALPSLRILYMM). Over 88 to 227 (DEINNPVLTV…HFENWSASMI (140 aa)) the chain is Mitochondrial intermembrane. Positions 161, 196, 198, 200, 204, and 207 each coordinate Cu cation. Mg(2+) is bound at residue glutamate 198.

It belongs to the cytochrome c oxidase subunit 2 family. In terms of assembly, component of the cytochrome c oxidase (complex IV, CIV), a multisubunit enzyme composed of 14 subunits. The complex is composed of a catalytic core of 3 subunits MT-CO1, MT-CO2 and MT-CO3, encoded in the mitochondrial DNA, and 11 supernumerary subunits COX4I, COX5A, COX5B, COX6A, COX6B, COX6C, COX7A, COX7B, COX7C, COX8 and NDUFA4, which are encoded in the nuclear genome. The complex exists as a monomer or a dimer and forms supercomplexes (SCs) in the inner mitochondrial membrane with NADH-ubiquinone oxidoreductase (complex I, CI) and ubiquinol-cytochrome c oxidoreductase (cytochrome b-c1 complex, complex III, CIII), resulting in different assemblies (supercomplex SCI(1)III(2)IV(1) and megacomplex MCI(2)III(2)IV(2)). Found in a complex with TMEM177, COA6, COX18, COX20, SCO1 and SCO2. Interacts with TMEM177 in a COX20-dependent manner. Interacts with COX20. Interacts with COX16. Requires Cu cation as cofactor.

It is found in the mitochondrion inner membrane. It carries out the reaction 4 Fe(II)-[cytochrome c] + O2 + 8 H(+)(in) = 4 Fe(III)-[cytochrome c] + 2 H2O + 4 H(+)(out). In terms of biological role, component of the cytochrome c oxidase, the last enzyme in the mitochondrial electron transport chain which drives oxidative phosphorylation. The respiratory chain contains 3 multisubunit complexes succinate dehydrogenase (complex II, CII), ubiquinol-cytochrome c oxidoreductase (cytochrome b-c1 complex, complex III, CIII) and cytochrome c oxidase (complex IV, CIV), that cooperate to transfer electrons derived from NADH and succinate to molecular oxygen, creating an electrochemical gradient over the inner membrane that drives transmembrane transport and the ATP synthase. Cytochrome c oxidase is the component of the respiratory chain that catalyzes the reduction of oxygen to water. Electrons originating from reduced cytochrome c in the intermembrane space (IMS) are transferred via the dinuclear copper A center (CU(A)) of subunit 2 and heme A of subunit 1 to the active site in subunit 1, a binuclear center (BNC) formed by heme A3 and copper B (CU(B)). The BNC reduces molecular oxygen to 2 water molecules using 4 electrons from cytochrome c in the IMS and 4 protons from the mitochondrial matrix. This is Cytochrome c oxidase subunit 2 (MT-CO2) from Batomys granti (Luzon hairy-tailed rat).